The primary structure comprises 428 residues: tRNA modification GTPase MnmE (428 aa).

The (6S)-5-formyl-5,6,7,8-tetrahydrofolate site is built by arginine 20, glutamate 77, and lysine 117. The TrmE-type G domain occupies 213-351 (GFEVAIIGPP…LVQRISDVLK (139 aa)). Asparagine 223 contacts K(+). GTP is bound by residues 223 to 228 (NAGKST), 242 to 248 (SEVAGTT), and 267 to 270 (DTAG). Residue serine 227 participates in Mg(2+) binding. The K(+) site is built by serine 242, valine 244, and threonine 247. Threonine 248 contacts Mg(2+). Lysine 428 contacts (6S)-5-formyl-5,6,7,8-tetrahydrofolate.

This sequence belongs to the TRAFAC class TrmE-Era-EngA-EngB-Septin-like GTPase superfamily. TrmE GTPase family. Homodimer. Heterotetramer of two MnmE and two MnmG subunits. K(+) is required as a cofactor.

Its subcellular location is the cytoplasm. Its function is as follows. Exhibits a very high intrinsic GTPase hydrolysis rate. Involved in the addition of a carboxymethylaminomethyl (cmnm) group at the wobble position (U34) of certain tRNAs, forming tRNA-cmnm(5)s(2)U34. This Ruegeria pomeroyi (strain ATCC 700808 / DSM 15171 / DSS-3) (Silicibacter pomeroyi) protein is tRNA modification GTPase MnmE.